The sequence spans 315 residues: Acetyl-coenzyme A carboxylase carboxyl transferase subunit alpha (315 aa).

The 255-residue stretch at 38 to 292 folds into the CoA carboxyltransferase C-terminal domain; sequence RLQKKSNELT…KLRLKEDLAE (255 aa).

It belongs to the AccA family. As to quaternary structure, acetyl-CoA carboxylase is a heterohexamer composed of biotin carboxyl carrier protein (AccB), biotin carboxylase (AccC) and two subunits each of ACCase subunit alpha (AccA) and ACCase subunit beta (AccD).

The protein resides in the cytoplasm. The catalysed reaction is N(6)-carboxybiotinyl-L-lysyl-[protein] + acetyl-CoA = N(6)-biotinyl-L-lysyl-[protein] + malonyl-CoA. It participates in lipid metabolism; malonyl-CoA biosynthesis; malonyl-CoA from acetyl-CoA: step 1/1. Functionally, component of the acetyl coenzyme A carboxylase (ACC) complex. First, biotin carboxylase catalyzes the carboxylation of biotin on its carrier protein (BCCP) and then the CO(2) group is transferred by the carboxyltransferase to acetyl-CoA to form malonyl-CoA. This chain is Acetyl-coenzyme A carboxylase carboxyl transferase subunit alpha, found in Haemophilus influenzae (strain 86-028NP).